A 302-amino-acid chain; its full sequence is MSNALVVAGDSLVPSNRVSQMHPVFKAFVCGSLSGTCSTLLFQPLDLVKTRIQAHQLSASAAGSRPRMLNLLIKVVRNENILGLWKGVSPSFLRCIPGVGLYFSTLYTLKHHFFSERDPKPLESVMLGAGSRTVAAVCMLPFTVVKTRYESGKYGYNSVYGALKAIYKTEGPRGLFSGLTATLMRDAPFSGIYLMFYTRAKKLAPHDQIDPLFSPVLNFSCGIVAGILASVATQPADVIKTHMQLANEKYHWTGKVALNIYRTQGLTGFFQGGVPRALRRTLMAAMAWTVYEQMMEKMGLKS.

Solcar repeat units lie at residues 22-112 (HPVF…LKHH), 119-203 (PKPL…AKKL), and 213-297 (FSPV…MMEK). A run of 6 helical transmembrane segments spans residues 28-53 (FVCG…TRIQ), 87-113 (GVSP…KHHF), 125-150 (VMLG…TRYE), 178-201 (GLTA…TRAK), 217-243 (LNFS…KTHM), and 272-290 (GGVP…AWTV).

It belongs to the mitochondrial carrier (TC 2.A.29) family. SLC25A38 subfamily.

Its subcellular location is the mitochondrion inner membrane. The enzyme catalyses glycine(in) = glycine(out). In terms of biological role, mitochondrial glycine transporter that imports glycine into the mitochondrial matrix. Plays an important role in providing glycine for the first enzymatic step in heme biosynthesis, the condensation of glycine with succinyl-CoA to produce 5-aminolevulinate (ALA) in the mitochondrial matrix. Required during erythropoiesis. Functionally, may play a role as pro-apoptotic protein that induces caspase-dependent apoptosis. The protein is Mitochondrial glycine transporter of Xenopus laevis (African clawed frog).